A 149-amino-acid polypeptide reads, in one-letter code: Protein SprT-like (149 aa).

Positions 6 to 147 (LQALVEQISI…VCGRCRSKLK (142 aa)) constitute a SprT-like domain. H67 provides a ligand contact to Zn(2+). Residue E68 is part of the active site. H71 contacts Zn(2+).

The protein belongs to the SprT family. Requires Zn(2+) as cofactor.

The protein localises to the cytoplasm. The chain is Protein SprT-like from Geobacillus kaustophilus (strain HTA426).